The following is a 302-amino-acid chain: tRNA dimethylallyltransferase (302 aa).

10–17 contacts ATP; that stretch reads GPTATGKS. Residue 12–17 participates in substrate binding; it reads TATGKS. The interaction with substrate tRNA stretch occupies residues 35–38; the sequence is DSRQ.

It belongs to the IPP transferase family. Monomer. Mg(2+) is required as a cofactor.

The enzyme catalyses adenosine(37) in tRNA + dimethylallyl diphosphate = N(6)-dimethylallyladenosine(37) in tRNA + diphosphate. Functionally, catalyzes the transfer of a dimethylallyl group onto the adenine at position 37 in tRNAs that read codons beginning with uridine, leading to the formation of N6-(dimethylallyl)adenosine (i(6)A). This is tRNA dimethylallyltransferase from Acaryochloris marina (strain MBIC 11017).